Here is a 261-residue protein sequence, read N- to C-terminus: MIIDQVAFRIGPLQIRWYSLSYIFGMIFAYWYIKKIDKYQVFNKESYESVISWWVISVILGGRIGYILFYNLDFYIHFPIEMLKLWNGGMSFHGALVGVMIGMYIFCRKNKIDVLAAFDLGACAVPVGIFFGRIANFINGELYGKVTDIKIGMIFPASGDLLYRHPSQLYEAFGEGFLLFIITNSLFFFTKIKTSKGMLSSVFCIWYGVIRFFIEFVREPDVQIGYIIFDQITMGQLLSIFMIIMGFYFIKLAKVQDKFSI.

The next 4 helical transmembrane spans lie at 13–33 (LQIR…YWYI), 50–70 (VISW…ILFY), 86–106 (WNGG…MYIF), and 112–132 (IDVL…IFFG). Residue Arg133 coordinates a 1,2-diacyl-sn-glycero-3-phospho-(1'-sn-glycerol). 3 helical membrane passes run 169 to 189 (LYEA…LFFF), 197 to 217 (GMLS…IEFV), and 232 to 252 (ITMG…FIKL).

The protein belongs to the Lgt family.

It localises to the cell inner membrane. It carries out the reaction L-cysteinyl-[prolipoprotein] + a 1,2-diacyl-sn-glycero-3-phospho-(1'-sn-glycerol) = an S-1,2-diacyl-sn-glyceryl-L-cysteinyl-[prolipoprotein] + sn-glycerol 1-phosphate + H(+). It participates in protein modification; lipoprotein biosynthesis (diacylglyceryl transfer). Catalyzes the transfer of the diacylglyceryl group from phosphatidylglycerol to the sulfhydryl group of the N-terminal cysteine of a prolipoprotein, the first step in the formation of mature lipoproteins. The protein is Phosphatidylglycerol--prolipoprotein diacylglyceryl transferase of Ehrlichia canis (strain Jake).